The sequence spans 377 residues: tRNA-specific 2-thiouridylase MnmA (377 aa).

ATP-binding positions include 22-29 (GMSGGVDS) and methionine 48. The interaction with target base in tRNA stretch occupies residues 108–110 (NPD). Cysteine 113 serves as the catalytic Nucleophile. A disulfide bridge links cysteine 113 with cysteine 210. Position 138 (glycine 138) interacts with ATP. Positions 160–162 (KDQ) are interaction with tRNA. Cysteine 210 (cysteine persulfide intermediate) is an active-site residue. The tract at residues 322 to 323 (RY) is interaction with tRNA.

This sequence belongs to the MnmA/TRMU family.

It is found in the cytoplasm. The catalysed reaction is S-sulfanyl-L-cysteinyl-[protein] + uridine(34) in tRNA + AH2 + ATP = 2-thiouridine(34) in tRNA + L-cysteinyl-[protein] + A + AMP + diphosphate + H(+). Catalyzes the 2-thiolation of uridine at the wobble position (U34) of tRNA, leading to the formation of s(2)U34. This chain is tRNA-specific 2-thiouridylase MnmA, found in Shewanella amazonensis (strain ATCC BAA-1098 / SB2B).